We begin with the raw amino-acid sequence, 475 residues long: Ribulose bisphosphate carboxylase large chain (475 aa).

Residues Asn-123 and Thr-173 each coordinate substrate. Lys-175 functions as the Proton acceptor in the catalytic mechanism. Lys-177 is a binding site for substrate. Mg(2+) contacts are provided by Lys-201, Asp-203, and Glu-204. Lys-201 carries the N6-carboxylysine modification. The active-site Proton acceptor is the His-294. 3 residues coordinate substrate: Arg-295, His-327, and Ser-379.

Belongs to the RuBisCO large chain family. Type I subfamily. Heterohexadecamer of 8 large chains and 8 small chains; disulfide-linked. The disulfide link is formed within the large subunit homodimers. Interacts with assembly factor Raf1 which helps form the holoenzyme, most interaction (and folding) occurs in the cytoplasm. The cofactor is Mg(2+). In terms of processing, the disulfide bond which can form in the large chain dimeric partners within the hexadecamer appears to be associated with oxidative stress and protein turnover.

It is found in the carboxysome. Its subcellular location is the cytoplasm. The enzyme catalyses 2 (2R)-3-phosphoglycerate + 2 H(+) = D-ribulose 1,5-bisphosphate + CO2 + H2O. It carries out the reaction D-ribulose 1,5-bisphosphate + O2 = 2-phosphoglycolate + (2R)-3-phosphoglycerate + 2 H(+). Functionally, ruBisCO catalyzes two reactions: the carboxylation of D-ribulose 1,5-bisphosphate, the primary event in carbon dioxide fixation, as well as the oxidative fragmentation of the pentose substrate in the photorespiration process. Both reactions occur simultaneously and in competition at the same active site. The sequence is that of Ribulose bisphosphate carboxylase large chain from Thermosynechococcus vestitus (strain NIES-2133 / IAM M-273 / BP-1).